The chain runs to 108 residues: MVVKSALLFVLAAVLEIGGAWLVWQGFREHRGWLWVGAGVLALGAYGFVAAFQPDANFGRVLAAYGGVFVAGSLIWGMVADGFRPDRWDITGAAVCLLGVVLIMYAPR.

Helical transmembrane passes span 7 to 27 (LLFV…WQGF), 32 to 52 (GWLW…VAAF), 61 to 81 (VLAA…MVAD), and 87 to 107 (RWDI…MYAP).

It belongs to the UPF0060 family.

The protein localises to the cell membrane. In Mycolicibacterium gilvum (strain PYR-GCK) (Mycobacterium gilvum (strain PYR-GCK)), this protein is UPF0060 membrane protein Mflv_3127.